A 57-amino-acid chain; its full sequence is UPF0391 membrane protein HNE_2348 (57 aa).

Transmembrane regions (helical) follow at residues 4 to 24 (WALTFFILAIIAALLGFGGIA) and 27 to 47 (AASIAKILFFVFLALLVITFV).

This sequence belongs to the UPF0391 family.

It is found in the cell membrane. The polypeptide is UPF0391 membrane protein HNE_2348 (Hyphomonas neptunium (strain ATCC 15444)).